The chain runs to 637 residues: Biosynthetic arginine decarboxylase (637 aa).

At K101 the chain carries N6-(pyridoxal phosphate)lysine. Residue 286-296 (FDVGGGLAVDY) participates in substrate binding.

This sequence belongs to the Orn/Lys/Arg decarboxylase class-II family. SpeA subfamily. Mg(2+) is required as a cofactor. Requires pyridoxal 5'-phosphate as cofactor.

The enzyme catalyses L-arginine + H(+) = agmatine + CO2. The protein operates within amine and polyamine biosynthesis; agmatine biosynthesis; agmatine from L-arginine: step 1/1. Its function is as follows. Catalyzes the biosynthesis of agmatine from arginine. In Shewanella baltica (strain OS195), this protein is Biosynthetic arginine decarboxylase.